We begin with the raw amino-acid sequence, 211 residues long: Thiamine-phosphate synthase (211 aa).

Residues 39–41 (QLR) and asparagine 71 each bind 4-amino-2-methyl-5-(diphosphooxymethyl)pyrimidine. Aspartate 72 and aspartate 91 together coordinate Mg(2+). Serine 110 is a binding site for 4-amino-2-methyl-5-(diphosphooxymethyl)pyrimidine. 136–138 (TGT) contacts 2-[(2R,5Z)-2-carboxy-4-methylthiazol-5(2H)-ylidene]ethyl phosphate. Lysine 139 contributes to the 4-amino-2-methyl-5-(diphosphooxymethyl)pyrimidine binding site. Residues glycine 167 and 187-188 (VS) contribute to the 2-[(2R,5Z)-2-carboxy-4-methylthiazol-5(2H)-ylidene]ethyl phosphate site.

The protein belongs to the thiamine-phosphate synthase family. Requires Mg(2+) as cofactor.

The enzyme catalyses 2-[(2R,5Z)-2-carboxy-4-methylthiazol-5(2H)-ylidene]ethyl phosphate + 4-amino-2-methyl-5-(diphosphooxymethyl)pyrimidine + 2 H(+) = thiamine phosphate + CO2 + diphosphate. The catalysed reaction is 2-(2-carboxy-4-methylthiazol-5-yl)ethyl phosphate + 4-amino-2-methyl-5-(diphosphooxymethyl)pyrimidine + 2 H(+) = thiamine phosphate + CO2 + diphosphate. It carries out the reaction 4-methyl-5-(2-phosphooxyethyl)-thiazole + 4-amino-2-methyl-5-(diphosphooxymethyl)pyrimidine + H(+) = thiamine phosphate + diphosphate. Its pathway is cofactor biosynthesis; thiamine diphosphate biosynthesis; thiamine phosphate from 4-amino-2-methyl-5-diphosphomethylpyrimidine and 4-methyl-5-(2-phosphoethyl)-thiazole: step 1/1. Its function is as follows. Condenses 4-methyl-5-(beta-hydroxyethyl)thiazole monophosphate (THZ-P) and 2-methyl-4-amino-5-hydroxymethyl pyrimidine pyrophosphate (HMP-PP) to form thiamine monophosphate (TMP). The polypeptide is Thiamine-phosphate synthase (Xanthobacter autotrophicus (strain ATCC BAA-1158 / Py2)).